A 582-amino-acid chain; its full sequence is Formate--tetrahydrofolate ligase (582 aa).

Residue 65 to 72 participates in ATP binding; sequence TPLGEGKT.

The protein belongs to the formate--tetrahydrofolate ligase family.

The catalysed reaction is (6S)-5,6,7,8-tetrahydrofolate + formate + ATP = (6R)-10-formyltetrahydrofolate + ADP + phosphate. It participates in one-carbon metabolism; tetrahydrofolate interconversion. This is Formate--tetrahydrofolate ligase from Vibrio campbellii (strain ATCC BAA-1116).